We begin with the raw amino-acid sequence, 365 residues long: S-adenosylmethionine:tRNA ribosyltransferase-isomerase (365 aa).

This sequence belongs to the QueA family. Monomer.

It localises to the cytoplasm. It catalyses the reaction 7-aminomethyl-7-carbaguanosine(34) in tRNA + S-adenosyl-L-methionine = epoxyqueuosine(34) in tRNA + adenine + L-methionine + 2 H(+). It participates in tRNA modification; tRNA-queuosine biosynthesis. Functionally, transfers and isomerizes the ribose moiety from AdoMet to the 7-aminomethyl group of 7-deazaguanine (preQ1-tRNA) to give epoxyqueuosine (oQ-tRNA). This is S-adenosylmethionine:tRNA ribosyltransferase-isomerase from Rickettsia peacockii (strain Rustic).